A 401-amino-acid polypeptide reads, in one-letter code: Haptoglobin (401 aa).

A signal peptide spans Met-1–Ala-18. 2 consecutive Sushi domains span residues Asp-28–Glu-83 and Asp-85–Ala-142. 3 disulfides stabilise this stretch: Cys-49/Cys-81, Cys-106/Cys-140, and Cys-144/Cys-261. The region spanning Ile-157–Ala-399 is the Peptidase S1 domain. 2 N-linked (GlcNAc...) asparagine glycosylation sites follow: Asn-286 and Asn-316. 2 disulfide bridges follow: Cys-304/Cys-335 and Cys-346/Cys-376. The interval Ala-313 to Thr-318 is interaction with CD163.

Belongs to the peptidase S1 family. In terms of assembly, tetramer of two alpha and two beta chains; disulfide-linked. The hemoglobin/haptoglobin complex is composed of a haptoglobin dimer bound to two hemoglobin alpha-beta dimers. Interacts with CD163. Interacts with ERGIC3. As to expression, expressed by the liver and secreted in plasma.

The protein localises to the secreted. The protein resides in the extracellular space. Its function is as follows. As a result of hemolysis, hemoglobin is found to accumulate in the kidney and is secreted in the urine. Haptoglobin captures, and combines with free plasma hemoglobin to allow hepatic recycling of heme iron and to prevent kidney damage. Haptoglobin also acts as an antioxidant, has antibacterial activity and plays a role in modulating many aspects of the acute phase response. Hemoglobin/haptoglobin complexes are rapidly cleared by the macrophage CD163 scavenger receptor expressed on the surface of liver Kupfer cells through an endocytic lysosomal degradation pathway. In Bos taurus (Bovine), this protein is Haptoglobin (HP).